The sequence spans 320 residues: Malate dehydrogenase (320 aa).

Residues glycine 10 to glycine 15 and aspartate 34 contribute to the NAD(+) site. Positions 83 and 89 each coordinate substrate. Residues asparagine 96 and isoleucine 119–asparagine 121 contribute to the NAD(+) site. 2 residues coordinate substrate: asparagine 121 and arginine 152. Histidine 176 acts as the Proton acceptor in catalysis.

It belongs to the LDH/MDH superfamily. MDH type 3 family.

The catalysed reaction is (S)-malate + NAD(+) = oxaloacetate + NADH + H(+). Catalyzes the reversible oxidation of malate to oxaloacetate. This chain is Malate dehydrogenase, found in Methylobacterium nodulans (strain LMG 21967 / CNCM I-2342 / ORS 2060).